The sequence spans 289 residues: Phosphate import ATP-binding protein PstB 2 (289 aa).

The ABC transporter domain maps to L37–T276. G69–S76 contributes to the ATP binding site.

This sequence belongs to the ABC transporter superfamily. Phosphate importer (TC 3.A.1.7) family. The complex is composed of two ATP-binding proteins (PstB), two transmembrane proteins (PstC and PstA) and a solute-binding protein (PstS).

The protein resides in the cell inner membrane. It catalyses the reaction phosphate(out) + ATP + H2O = ADP + 2 phosphate(in) + H(+). Its function is as follows. Part of the ABC transporter complex PstSACB involved in phosphate import. Responsible for energy coupling to the transport system. In Trichormus variabilis (strain ATCC 29413 / PCC 7937) (Anabaena variabilis), this protein is Phosphate import ATP-binding protein PstB 2.